A 321-amino-acid chain; its full sequence is N-acetyl-gamma-glutamyl-phosphate reductase (321 aa).

C131 is a catalytic residue.

It belongs to the NAGSA dehydrogenase family. Type 1 subfamily.

It is found in the cytoplasm. The catalysed reaction is N-acetyl-L-glutamate 5-semialdehyde + phosphate + NADP(+) = N-acetyl-L-glutamyl 5-phosphate + NADPH + H(+). The protein operates within amino-acid biosynthesis; L-arginine biosynthesis; N(2)-acetyl-L-ornithine from L-glutamate: step 3/4. Its function is as follows. Catalyzes the NADPH-dependent reduction of N-acetyl-5-glutamyl phosphate to yield N-acetyl-L-glutamate 5-semialdehyde. In Christiangramia forsetii (strain DSM 17595 / CGMCC 1.15422 / KT0803) (Gramella forsetii), this protein is N-acetyl-gamma-glutamyl-phosphate reductase.